The chain runs to 677 residues: UvrABC system protein B (677 aa).

The region spanning 24–412 (EGVLEGVPAQ…EGIVVEQVIR (389 aa)) is the Helicase ATP-binding domain. ATP is bound at residue 37–44 (GVTGSGKT). A Beta-hairpin motif is present at residues 90–113 (YYDYYQPEAYLPSSDTYIEKDLAI). The region spanning 429–591 (QIDDLMEEIQ…ITPQQIKKAR (163 aa)) is the Helicase C-terminal domain. The UVR domain maps to 635–670 (EKSMERTRKLMQEAAKKLEFIEAAQYRDELLKMEDL).

This sequence belongs to the UvrB family. As to quaternary structure, forms a heterotetramer with UvrA during the search for lesions. Interacts with UvrC in an incision complex.

The protein localises to the cytoplasm. Its function is as follows. The UvrABC repair system catalyzes the recognition and processing of DNA lesions. A damage recognition complex composed of 2 UvrA and 2 UvrB subunits scans DNA for abnormalities. Upon binding of the UvrA(2)B(2) complex to a putative damaged site, the DNA wraps around one UvrB monomer. DNA wrap is dependent on ATP binding by UvrB and probably causes local melting of the DNA helix, facilitating insertion of UvrB beta-hairpin between the DNA strands. Then UvrB probes one DNA strand for the presence of a lesion. If a lesion is found the UvrA subunits dissociate and the UvrB-DNA preincision complex is formed. This complex is subsequently bound by UvrC and the second UvrB is released. If no lesion is found, the DNA wraps around the other UvrB subunit that will check the other stand for damage. In Bacteroides fragilis (strain ATCC 25285 / DSM 2151 / CCUG 4856 / JCM 11019 / LMG 10263 / NCTC 9343 / Onslow / VPI 2553 / EN-2), this protein is UvrABC system protein B.